A 511-amino-acid polypeptide reads, in one-letter code: Inactive cytochrome P450 monooxygenase cloA (511 aa).

The chain crosses the membrane as a helical span at residues 17–37; the sequence is ILLTAGLCVPCALVIHGIYNL. N-linked (GlcNAc...) asparagine glycosylation is found at Asn81 and Asn344. Position 450 (Cys450) interacts with heme.

The protein belongs to the cytochrome P450 family. Requires heme as cofactor.

It localises to the membrane. In terms of biological role, inactive cytochrome P450 monooxygenase; part of the gene cluster that mediates the biosynthesis of fungal ergot alkaloid. DmaW catalyzes the first step of ergot alkaloid biosynthesis by condensing dimethylallyl diphosphate (DMAP) and tryptophan to form 4-dimethylallyl-L-tryptophan. The second step is catalyzed by the methyltransferase easF that methylates 4-dimethylallyl-L-tryptophan in the presence of S-adenosyl-L-methionine, resulting in the formation of 4-dimethylallyl-L-abrine. The catalase easC and the FAD-dependent oxidoreductase easE then transform 4-dimethylallyl-L-abrine to chanoclavine-I which is further oxidized by easD in the presence of NAD(+), resulting in the formation of chanoclavine-I aldehyde. Agroclavine dehydrogenase easG then mediates the conversion of chanoclavine-I aldehyde to agroclavine via a non-enzymatic adduct reaction: the substrate is an iminium intermediate that is formed spontaneously from chanoclavine-I aldehyde in the presence of glutathione. Further conversion of agroclavine to paspalic acid is a two-step process involving oxidation of agroclavine to elymoclavine and of elymoclavine to paspalic acid, the second step being performed by the elymoclavine oxidase cloA. However, cloA does not encode a functional enzyme indicating that C.fusiformis terminates its ergot alkaloid pathway at elymoclavine. In Claviceps fusiformis (Ergot fungus), this protein is Inactive cytochrome P450 monooxygenase cloA.